The primary structure comprises 1262 residues: Protein stoned-B (1262 aa).

4 short sequence motifs (NPF) span residues 3 to 5 (NPF), 19 to 21 (NPF), 33 to 35 (NPF), and 43 to 45 (NPF). The tract at residues 17–36 (AANPFLMQSEPEPSSDNPFM) is disordered. Residues 49–189 (ADDLELGAEP…DVSVDSGSSA (141 aa)) form a disordered region. A compositionally biased stretch (acidic residues) spans 50–60 (DDLELGAEPEA). Over residues 101 to 111 (PPQSQPQLQSH) the composition is skewed to low complexity. Residues 115-124 (HPPPPRPLVP) are compositionally biased toward pro residues. Over residues 128-145 (TQDLISTVSSQLDETSSE) the composition is skewed to polar residues. Residues 172–189 (DSGLADLLDVSVDSGSSA) show a composition bias toward low complexity. Positions 210-212 (NPF) match the NPF 5 motif. Disordered regions lie at residues 225–452 (VPLP…SPPT) and 474–507 (EEMD…NFAP). Residues 233 to 272 (KQPPRPPPPRPAPPRPAPPGQAAPQRPPPPLAAVNPPPAA) are compositionally biased toward pro residues. Positions 325–345 (DLDETIGEGEPPEQEEPDTEQ) are enriched in acidic residues. Over residues 384–401 (QVNNMAAPSGTASTQRAT) the composition is skewed to polar residues. Over residues 417–429 (DDEDEPEAMQEPE) the composition is skewed to acidic residues. The short motif at 493 to 495 (NPF) is the NPF 6 element. 2 positions are modified to phosphoserine: S623 and S626. A disordered region spans residues 643–709 (SGVAPQLAPP…QDTPQTPLYD (67 aa)). The NPF 7 signature appears at 673-675 (NPF). The SHD domain occupies 728–902 (GWEMQLRQPN…KIPALRERAL (175 aa)). Residues 847-1108 (KEFGSDLKKL…KGIERILGAV (262 aa)) form an interaction with Syt region. In terms of domain architecture, MHD spans 906–1219 (MEEVQVTAVD…ARHEYKVGIE (314 aa)). The interval 1226-1262 (TNAYLAATRPIREEPPTTATKPTASPVAPSDSDTDSN) is disordered. Residues 1241-1254 (PTTATKPTASPVAP) are compositionally biased toward low complexity.

The protein belongs to the Stoned B family. As to quaternary structure, interacts with the second C2 domain of Syt.

The protein localises to the cytoplasm. The protein resides in the synapse. In terms of biological role, adapter protein involved in endocytic recycling of synaptic vesicles membranes. May act by mediating the retrieval of synaptotagmin protein Syt from the plasma membrane, thereby facilitating the internalization of multiple synaptic vesicles from the plasma membrane. This is Protein stoned-B (stnB) from Drosophila melanogaster (Fruit fly).